We begin with the raw amino-acid sequence, 665 residues long: BTB/POZ domain-containing protein At1g30440 (665 aa).

In terms of domain architecture, BTB spans 28–98 (SDIVVEVGEM…CYGVKLELTA (71 aa)). Residues 214–508 (DWWYEDASML…VQVLFFEQLQ (295 aa)) enclose the NPH3 domain. Residues 260–280 (LKRRRGGPESSGRFSTPLGSG) form a disordered region. Over residues 271-280 (GRFSTPLGSG) the composition is skewed to polar residues. The residue at position 279 (serine 279) is a Phosphoserine. Positions 281–306 (NVLSEEEQKNLLEEIQELLRMQKGLV) form a coiled coil. Tyrosine 449 carries the post-translational modification Phosphotyrosine. Residues 626–639 (SAQEGSVSKSNNEN) are compositionally biased toward polar residues. The disordered stretch occupies residues 626-665 (SAQEGSVSKSNNENVKIEKLKDVKERRGKHKKASSISSER). Positions 640 to 650 (VKIEKLKDVKE) are enriched in basic and acidic residues.

This sequence belongs to the NPH3 family.

Its pathway is protein modification; protein ubiquitination. May act as a substrate-specific adapter of an E3 ubiquitin-protein ligase complex (CUL3-RBX1-BTB) which mediates the ubiquitination and subsequent proteasomal degradation of target proteins. This Arabidopsis thaliana (Mouse-ear cress) protein is BTB/POZ domain-containing protein At1g30440.